Consider the following 880-residue polypeptide: Leucine--tRNA ligase (880 aa).

A 'HIGH' region motif is present at residues 46 to 56; sequence PYPSGALHMGH. Residues 638–642 carry the 'KMSKS' region motif; it reads KMSKS. K641 is an ATP binding site.

It belongs to the class-I aminoacyl-tRNA synthetase family.

Its subcellular location is the cytoplasm. It catalyses the reaction tRNA(Leu) + L-leucine + ATP = L-leucyl-tRNA(Leu) + AMP + diphosphate. The chain is Leucine--tRNA ligase from Stenotrophomonas maltophilia (strain K279a).